A 337-amino-acid chain; its full sequence is Lipoate-protein ligase A (337 aa).

The BPL/LPL catalytic domain maps to 29–216; it reads DQNQTILFLW…AFFNYYQTTV (188 aa). ATP contacts are provided by residues Arg-71, 76 to 79, and Lys-134; that span reads GAVF. Lys-134 contacts (R)-lipoate.

It belongs to the LplA family. As to quaternary structure, monomer.

It is found in the cytoplasm. It catalyses the reaction L-lysyl-[lipoyl-carrier protein] + (R)-lipoate + ATP = N(6)-[(R)-lipoyl]-L-lysyl-[lipoyl-carrier protein] + AMP + diphosphate + H(+). It participates in protein modification; protein lipoylation via exogenous pathway; protein N(6)-(lipoyl)lysine from lipoate: step 1/2. Its pathway is protein modification; protein lipoylation via exogenous pathway; protein N(6)-(lipoyl)lysine from lipoate: step 2/2. Its function is as follows. Catalyzes both the ATP-dependent activation of exogenously supplied lipoate to lipoyl-AMP and the transfer of the activated lipoyl onto the lipoyl domains of lipoate-dependent enzymes. The protein is Lipoate-protein ligase A of Blochmanniella floridana.